A 579-amino-acid chain; its full sequence is Adipocyte plasma membrane-associated protein Hemomucin (579 aa).

At 1-6 (MGLLYA) the chain is on the cytoplasmic side. The helical transmembrane segment at 7-29 (LRVRIMNFMIFFLLIILMPGLPP) threads the bilayer. The Extracellular portion of the chain corresponds to 30–579 (RTTFPFKDYI…INKQGVNVEL (550 aa)). N-linked (GlcNAc...) asparagine glycans are attached at residues Asn-213 and Asn-217. Positions 427–579 (GLEASIGVPP…INKQGVNVEL (153 aa)) are disordered. Residues 435–529 (PPSKATPKPK…PKPTTTTTPT (95 aa)) show a composition bias toward low complexity.

This sequence belongs to the strictosidine synthase family. Interacts with sturkopf. In terms of processing, O-glycosylated. Glycosylated in the ovary of 4 day old females. Post-translationally, phosphorylated. In terms of tissue distribution, detected in ovaries (at protein level). In larvae, detected in the fat body, salivary glands, imaginal disks and gut (at protein level). In adults, expressed in the cardia, and in regions of the ventriculus including the area posterior to the cardia. In females also expressed in follicle cells.

It is found in the cell membrane. In terms of biological role, transmembrane mucin that may be involved in cellular adhesion and the innate immune response. Membrane-tethered mucins are involved in many cell surface functions and form a physical barrier around cells to regulate cell-cell and/or cell-substrate interactions, and protect against pathogens or harmful extracellular conditions. This mucin likely acts in hemocyte adhesion as it is released from hemocytes during coagulation and is also able to bind lipophorin particles which form part of the hemocyte coagulogen. Able to induce expression of the antibacterial proteins in the presence of GalNAc-specific lectins and so probably also functions in the innate immune response. This chain is Adipocyte plasma membrane-associated protein Hemomucin, found in Drosophila melanogaster (Fruit fly).